We begin with the raw amino-acid sequence, 266 residues long: Glucose 1-dehydrogenase (266 aa).

Residue 15 to 39 coordinates NADP(+); that stretch reads LVTGASQGIGEATALRFAEEGAQVA. S149 contributes to the substrate binding site. Y162 (proton acceptor) is an active-site residue.

This sequence belongs to the short-chain dehydrogenases/reductases (SDR) family. Homotetramer or homooctamer.

The enzyme catalyses D-glucose + NADP(+) = D-glucono-1,5-lactone + NADPH + H(+). Functionally, oxidizes both D-glucose and D-mannose, but is 15 times more catalytically efficient with mannose. Strictly dependent on NADP. This is Glucose 1-dehydrogenase from Gluconobacter oxydans (strain 621H) (Gluconobacter suboxydans).